The sequence spans 152 residues: Ribosome maturation factor RimP (152 aa).

The protein belongs to the RimP family.

It localises to the cytoplasm. In terms of biological role, required for maturation of 30S ribosomal subunits. The protein is Ribosome maturation factor RimP of Desulfitobacterium hafniense (strain DSM 10664 / DCB-2).